Here is a 377-residue protein sequence, read N- to C-terminus: Nitric oxide reductase FlRd-NAD(+) reductase (377 aa).

It belongs to the FAD-dependent oxidoreductase family. Requires FAD as cofactor.

It is found in the cytoplasm. It catalyses the reaction 2 reduced [nitric oxide reductase rubredoxin domain] + NAD(+) + H(+) = 2 oxidized [nitric oxide reductase rubredoxin domain] + NADH. It functions in the pathway nitrogen metabolism; nitric oxide reduction. Its function is as follows. One of at least two accessory proteins for anaerobic nitric oxide (NO) reductase. Reduces the rubredoxin moiety of NO reductase. The sequence is that of Nitric oxide reductase FlRd-NAD(+) reductase from Salmonella typhi.